The following is a 377-amino-acid chain: Prostaglandin reductase-3 (377 aa).

Lys35 is subject to N6-acetyllysine. NADP(+) is bound by residues Thr185, Ser205, Lys209, Tyr224, Ser247, Ile269, and Tyr275. Residue Ser299 is modified to Phosphoserine. Residues 303–305 and Asn361 each bind NADP(+); that span reads FFL.

The protein belongs to the zinc-containing alcohol dehydrogenase family. Quinone oxidoreductase subfamily.

Its subcellular location is the peroxisome. It carries out the reaction 13,14-dihydro-15-oxo-prostaglandin E2 + NADP(+) = 15-oxoprostaglandin E2 + NADPH + H(+). The catalysed reaction is 13,14-dihydro-15-oxo-prostaglandin E1 + NADP(+) = 15-oxoprostaglandin E1 + NADPH + H(+). The enzyme catalyses 13,14-dihydro-15-oxo-PGF2alpha + NADP(+) = 15-oxoprostaglandin F2alpha + NADPH + H(+). It catalyses the reaction 13,14-dihydro-15-oxo-prostaglandin F1alpha + NADP(+) = 15-oxoprostaglandin F1alpha + NADPH + H(+). Functionally, functions as 15-oxo-prostaglandin 13-reductase and acts on 15-keto-PGE1, 15-keto-PGE2, 15-keto-PGE1-alpha and 15-keto-PGE2-alpha with highest efficiency towards 15-keto-PGE2-alpha. Overexpression represses transcriptional activity of PPARG and inhibits adipocyte differentiation. This is Prostaglandin reductase-3 (PTGR3) from Bos taurus (Bovine).